The chain runs to 170 residues: Ribosome maturation factor RimM (170 aa).

One can recognise a PRC barrel domain in the interval lysine 97 to tryptophan 170.

This sequence belongs to the RimM family. As to quaternary structure, binds ribosomal protein uS19.

The protein localises to the cytoplasm. Functionally, an accessory protein needed during the final step in the assembly of 30S ribosomal subunit, possibly for assembly of the head region. Essential for efficient processing of 16S rRNA. May be needed both before and after RbfA during the maturation of 16S rRNA. It has affinity for free ribosomal 30S subunits but not for 70S ribosomes. The polypeptide is Ribosome maturation factor RimM (Dechloromonas aromatica (strain RCB)).